A 68-amino-acid polypeptide reads, in one-letter code: Neuronal regeneration-related protein (68 aa).

This Gallus gallus (Chicken) protein is Neuronal regeneration-related protein (NREP).